The primary structure comprises 249 residues: Undecaprenyl-diphosphatase (249 aa).

Transmembrane regions (helical) follow at residues 11–31 (GLTE…TAIF), 35–55 (PDVG…LIFV), 80–100 (LVLS…FIES), 101–121 (VFSS…LMLL), 135–155 (IPYL…LPGI), 180–200 (FLMS…KVAF), 202–222 (TEQI…LYLV), and 226–246 (VIGG…FFVL).

Belongs to the UppP family.

It is found in the cell membrane. It catalyses the reaction di-trans,octa-cis-undecaprenyl diphosphate + H2O = di-trans,octa-cis-undecaprenyl phosphate + phosphate + H(+). Functionally, catalyzes the dephosphorylation of undecaprenyl diphosphate (UPP). This is Undecaprenyl-diphosphatase from Methanococcus maripaludis (strain C6 / ATCC BAA-1332).